A 428-amino-acid chain; its full sequence is MTGNKIDQATPTEMMAGMAKKARLASQILAQAPTAQKAEALVLTADAIRRHSADILAANAQDVATAENNQSSSAMVDRLRLTEARLENMASALEVIAHLEDPVGQIIDKRTRPNGLELTRIRVPIGVIGIIYESRPNVTIDAAALTLMSGNAAILRGGSEAIHSNKALYQTMREGLAKAGLPEEAIQLVPTTDRALVGAMLTASGLIDLVIPRGGKSLVARVQQDARVPVLAHLDGINHSYVHKEADPEKVEKVVVNAKMRRTGICGATESLLIDRGYPVEKVKSLLQALHNAGCEIRGTAEIQKIDPEAKAVSEEDWGTEYLDAVLSVRFVDDMDDALSHIARYSSGHTDAILTENREVAEKFLASVDSAIVMWNASTQFADGGEFGLGAEIGIATGRIHARGPVALEGLTSYKWQVRGTGQIRPVA.

The protein belongs to the gamma-glutamyl phosphate reductase family.

It localises to the cytoplasm. It carries out the reaction L-glutamate 5-semialdehyde + phosphate + NADP(+) = L-glutamyl 5-phosphate + NADPH + H(+). It participates in amino-acid biosynthesis; L-proline biosynthesis; L-glutamate 5-semialdehyde from L-glutamate: step 2/2. Its function is as follows. Catalyzes the NADPH-dependent reduction of L-glutamate 5-phosphate into L-glutamate 5-semialdehyde and phosphate. The product spontaneously undergoes cyclization to form 1-pyrroline-5-carboxylate. The sequence is that of Gamma-glutamyl phosphate reductase from Zymomonas mobilis subsp. mobilis (strain ATCC 31821 / ZM4 / CP4).